The chain runs to 462 residues: Chromosomal replication initiator protein DnaA (462 aa).

The tract at residues 1–84 (MAVSLWQQCI…RFDIGSRPSA (84 aa)) is domain I, interacts with DnaA modulators. The interval 84–125 (APRPVQATAAVERPKFEQNTKPAKTSFNVNSPEPAMAANHRS) is domain II. Residues 126 to 342 (NINRTYQFEN…GALNRVIANA (217 aa)) form a domain III, AAA+ region region. Gly170, Gly172, Lys173, and Thr174 together coordinate ATP. Residues 343–462 (NFTGRPITID…YANLIRTLSS (120 aa)) form a domain IV, binds dsDNA region.

Belongs to the DnaA family. In terms of assembly, oligomerizes as a right-handed, spiral filament on DNA at oriC.

It is found in the cytoplasm. Plays an essential role in the initiation and regulation of chromosomal replication. ATP-DnaA binds to the origin of replication (oriC) to initiate formation of the DNA replication initiation complex once per cell cycle. Binds the DnaA box (a 9 base pair repeat at the origin) and separates the double-stranded (ds)DNA. Forms a right-handed helical filament on oriC DNA; dsDNA binds to the exterior of the filament while single-stranded (ss)DNA is stabiized in the filament's interior. The ATP-DnaA-oriC complex binds and stabilizes one strand of the AT-rich DNA unwinding element (DUE), permitting loading of DNA polymerase. After initiation quickly degrades to an ADP-DnaA complex that is not apt for DNA replication. Binds acidic phospholipids. In Shewanella sediminis (strain HAW-EB3), this protein is Chromosomal replication initiator protein DnaA.